A 242-amino-acid chain; its full sequence is Small ribosomal subunit protein uS2 (242 aa).

This sequence belongs to the universal ribosomal protein uS2 family.

This is Small ribosomal subunit protein uS2 from Vibrio campbellii (strain ATCC BAA-1116).